Consider the following 676-residue polypeptide: Probable metal-nicotianamine transporter YSL6 (676 aa).

Transmembrane regions (helical) follow at residues 38-58 (ITIR…IITH), 62-82 (LTVG…FFFV), 110-130 (CVVA…LIAM), 154-174 (GLWW…FSLV), 276-296 (IVNC…WPFV), 321-341 (VFIA…KIIA), 392-412 (FAIA…PIIF), 413-433 (PPLK…LAFC), 452-472 (IGLF…AGLA), 510-530 (VGTA…WTAF), 561-581 (LPKH…IVNL), 604-624 (FYIG…LFVW), and 639-659 (VASG…ILSI).

Belongs to the YSL (TC 2.A.67.2) family.

Its subcellular location is the membrane. Functionally, may be involved in the transport of nicotianamine-chelated metals. This chain is Probable metal-nicotianamine transporter YSL6 (YSL6), found in Arabidopsis thaliana (Mouse-ear cress).